The following is a 215-amino-acid chain: Uracil phosphoribosyltransferase (215 aa).

30–34 is a GTP binding site; sequence KGMVR. Residues Arg80, Arg105, and 139 to 147 each bind 5-phospho-alpha-D-ribose 1-diphosphate; that span reads DPMIATAST. Uracil contacts are provided by residues Ile202 and 207–209; that span reads GDA. Asp208 serves as a coordination point for 5-phospho-alpha-D-ribose 1-diphosphate.

It belongs to the UPRTase family. The cofactor is Mg(2+).

The catalysed reaction is UMP + diphosphate = 5-phospho-alpha-D-ribose 1-diphosphate + uracil. It participates in pyrimidine metabolism; UMP biosynthesis via salvage pathway; UMP from uracil: step 1/1. Allosterically activated by GTP. Its function is as follows. Catalyzes the conversion of uracil and 5-phospho-alpha-D-ribose 1-diphosphate (PRPP) to UMP and diphosphate. The polypeptide is Uracil phosphoribosyltransferase (Metallosphaera sedula (strain ATCC 51363 / DSM 5348 / JCM 9185 / NBRC 15509 / TH2)).